A 673-amino-acid chain; its full sequence is MSKPFKLNSAFKPSGDQPEAIRRLEEGLEDGLAHQTLLGVTGSGKTFTIANVIADLQRPTMVLAPNKTLAAQLYGEMKEFFPENAVEYFVSYYDYYQPEAYVPSSDTFIEKDASVNEHIEQMRLSATKAMLERRDVVVVASVSAIYGLGDPDLYLKMMLHLTVGMIIDQRAILRRLAELQYARNDQAFQRGTFRVRGEVIDIFPAESDDIALRVELFDEEVERLSLFDPLTGQIVSTIPRFTIYPKTHYVTPRERIVQAMEEIKEELAARRKVLLENNKLLEEQRLTQRTQFDLEMMNELGYCSGIENYSRFLSGRGPGEPPPTLFDYLPADGLLVVDESHVTIPQIGGMYRGDRARKETLVEYGFRLPSALDNRPLKFEEFEALAPQTIYVSATPGNYELEKSGGDVVDQVVRPTGLLDPIIEVRPVATQVDDLLSEIRQRAAINERVLVTTLTKRMAEDLTEYLEEHGERVRYLHSDIDTVERMEIIRDLRLGEFDVLVGINLLREGLDMPEVSLVAILDADKEGFLRSERSLIQTIGRAARNVNGKAILYGDKITPSMAKAIGETERRREKQQKYNEEHGITPQGLNKKVVDILALGQNIAKTKAKGRGKSRPIVEPDNVPMDMSPKALLQKIHELEGLMMQHAQNLEFEEAAQIRDQLHQLRELFIAAS.

The region spanning 26–414 (EGLEDGLAHQ…GGDVVDQVVR (389 aa)) is the Helicase ATP-binding domain. 39 to 46 (GVTGSGKT) contributes to the ATP binding site. The Beta-hairpin signature appears at 92–115 (YYDYYQPEAYVPSSDTFIEKDASV). The region spanning 431–597 (QVDDLLSEIR…GLNKKVVDIL (167 aa)) is the Helicase C-terminal domain. The region spanning 633–668 (LQKIHELEGLMMQHAQNLEFEEAAQIRDQLHQLREL) is the UVR domain.

The protein belongs to the UvrB family. As to quaternary structure, forms a heterotetramer with UvrA during the search for lesions. Interacts with UvrC in an incision complex.

The protein localises to the cytoplasm. In terms of biological role, the UvrABC repair system catalyzes the recognition and processing of DNA lesions. A damage recognition complex composed of 2 UvrA and 2 UvrB subunits scans DNA for abnormalities. Upon binding of the UvrA(2)B(2) complex to a putative damaged site, the DNA wraps around one UvrB monomer. DNA wrap is dependent on ATP binding by UvrB and probably causes local melting of the DNA helix, facilitating insertion of UvrB beta-hairpin between the DNA strands. Then UvrB probes one DNA strand for the presence of a lesion. If a lesion is found the UvrA subunits dissociate and the UvrB-DNA preincision complex is formed. This complex is subsequently bound by UvrC and the second UvrB is released. If no lesion is found, the DNA wraps around the other UvrB subunit that will check the other stand for damage. The protein is UvrABC system protein B of Shigella dysenteriae serotype 1 (strain Sd197).